The chain runs to 114 residues: Tyrosine-protein phosphatase 27 (114 aa).

Positions 1-114 (WQMIVEHKCC…ELGNDNPIVV (114 aa)) constitute a Tyrosine-protein phosphatase domain. Asp82 contacts substrate.

It belongs to the protein-tyrosine phosphatase family.

It catalyses the reaction O-phospho-L-tyrosyl-[protein] + H2O = L-tyrosyl-[protein] + phosphate. This Styela plicata (Wrinkled sea squirt) protein is Tyrosine-protein phosphatase 27 (STY-27).